The following is a 111-amino-acid chain: MIQVLLVIICLAVFPYQGSSIILESGNVNDFELVYPKKVTVLPTGAMNSAHPCCDPVTCKPKRGEHCISGPCCRNCKFLSPGTICKKAKGDDMNDYCTGISSDCPRNPWKD.

The signal sequence occupies residues 1-20 (MIQVLLVIICLAVFPYQGSS). Positions 21–46 (IILESGNVNDFELVYPKKVTVLPTGA) are excised as a propeptide. In terms of domain architecture, Disintegrin spans 47–111 (MNSAHPCCDP…SDCPRNPWKD (65 aa)). Cystine bridges form between cysteine 53/cysteine 76, cysteine 67/cysteine 73, cysteine 72/cysteine 97, and cysteine 85/cysteine 104. The Cell attachment site signature appears at 89–91 (KGD).

This sequence belongs to the disintegrin family. Dimeric disintegrin subfamily. As to quaternary structure, heterodimer with subunit beta; disulfide-linked. As to expression, expressed by the venom gland.

The protein localises to the secreted. Its function is as follows. Inhibits ADP-induced human platelet aggregation. Antagonist of alpha-IIb/beta-3 (ITGA2B/ITGB3). The polypeptide is Disintegrin CV-11-alpha (Cerastes vipera (Sahara sand viper)).